A 148-amino-acid chain; its full sequence is Small ribosomal subunit protein bS16 (148 aa).

The span at 111 to 122 (AAAGEEPVAEAT) shows a compositional bias: low complexity. Residues 111 to 148 (AAAGEEPVAEATTPKKKGGKKAEAEDKAEEQKSEEGQA) are disordered. Residues 130-148 (KKAEAEDKAEEQKSEEGQA) are compositionally biased toward basic and acidic residues.

This sequence belongs to the bacterial ribosomal protein bS16 family.

This is Small ribosomal subunit protein bS16 from Saccharopolyspora erythraea (strain ATCC 11635 / DSM 40517 / JCM 4748 / NBRC 13426 / NCIMB 8594 / NRRL 2338).